The chain runs to 469 residues: Adenosylhomocysteinase (469 aa).

Threonine 63, aspartate 139, and glutamate 164 together coordinate substrate. Residue 165–167 (TTT) participates in NAD(+) binding. The substrate site is built by lysine 194 and aspartate 198. NAD(+) is bound by residues asparagine 199, 228 to 233 (GYGDVG), glutamate 251, asparagine 300, 321 to 323 (IGH), and asparagine 375.

Belongs to the adenosylhomocysteinase family. NAD(+) is required as a cofactor.

It localises to the cytoplasm. The catalysed reaction is S-adenosyl-L-homocysteine + H2O = L-homocysteine + adenosine. It functions in the pathway amino-acid biosynthesis; L-homocysteine biosynthesis; L-homocysteine from S-adenosyl-L-homocysteine: step 1/1. In terms of biological role, may play a key role in the regulation of the intracellular concentration of adenosylhomocysteine. The sequence is that of Adenosylhomocysteinase from Pseudomonas fluorescens (strain SBW25).